We begin with the raw amino-acid sequence, 883 residues long: Phosphoenolpyruvate carboxylase (883 aa).

Catalysis depends on residues His-138 and Lys-546.

This sequence belongs to the PEPCase type 1 family. Mg(2+) is required as a cofactor.

The catalysed reaction is oxaloacetate + phosphate = phosphoenolpyruvate + hydrogencarbonate. Forms oxaloacetate, a four-carbon dicarboxylic acid source for the tricarboxylic acid cycle. The sequence is that of Phosphoenolpyruvate carboxylase from Salmonella choleraesuis (strain SC-B67).